The following is a 146-amino-acid chain: Gene 19.2 protein (146 aa).

The polypeptide is Gene 19.2 protein (19.2) (Escherichia coli (Bacteriophage T3)).